A 684-amino-acid polypeptide reads, in one-letter code: ATP-dependent DNA helicase RecG (684 aa).

Residues 51–148 form a wedge domain region; the sequence is RHIASMATLQ…ADVPQFQAPH (98 aa). A Helicase ATP-binding domain is found at 278-439; the sequence is DLARHRPMRR…VHADLEVSVI (162 aa). 291–298 is a binding site for ATP; sequence GDVGSGKT. Residues 392–395 carry the DEAH box motif; the sequence is DEQH.

The protein belongs to the helicase family. RecG subfamily. In terms of assembly, monomer.

It carries out the reaction Couples ATP hydrolysis with the unwinding of duplex DNA by translocating in the 3'-5' direction.. The catalysed reaction is ATP + H2O = ADP + phosphate + H(+). Plays a critical role in recombination and DNA repair. Helps process Holliday junction intermediates to mature products by catalyzing branch migration. Has replication fork regression activity, unwinds stalled or blocked replication forks to make a HJ that can be resolved. Has a DNA unwinding activity characteristic of a DNA helicase with 3'-5' polarity. This chain is ATP-dependent DNA helicase RecG, found in Acidithiobacillus ferridurans.